Here is a 433-residue protein sequence, read N- to C-terminus: MARNLVCGRWQLLRLLRPQRSYHSVAVSLRPLAAELLAARRGNGRPPCALLAVFTPRCISTSATLFAEAQVQAPPVIPATSIPAAVPEVASGGAADVVQCATEPSFTELGLGSYTPVGLIQNLLEYIHVDLGLPWWGAIATCTVLARCLVFPLIVKGQREAAKIHNHMPEMQKFSARIREAKLAGDQAEFYKATIEMTRYQKKHDIKLLRPLILPLTQAPVFISFFIALREMANLPVPSLQTGGLWWFQDLTVSDPIYVLPLVVTATMWCVLELGAETGVQSNDLQFMRNIIRVMPLVVLPVTIHFPSAVFMYWLSSNVFSLCQVACLRIPAVRTVLKIPQRVVHDPDKLPPREGFLKSFKKGWKNAEIAQQLREREQRMQKHLDLAARGPLRQTFTHNPLLQHDPSHPPKAPNSNNSSIKANAKKPWQDTLG.

Over 1-108 (MARNLVCGRW…QCATEPSFTE (108 aa)) the chain is Mitochondrial intermembrane. Residues 109–129 (LGLGSYTPVGLIQNLLEYIHV) form a helical membrane-spanning segment. Residues 130–134 (DLGLP) are Mitochondrial matrix-facing. Residues 135–155 (WWGAIATCTVLARCLVFPLIV) traverse the membrane as a helical segment. Residues 156-207 (KGQREAAKIHNHMPEMQKFSARIREAKLAGDQAEFYKATIEMTRYQKKHDIK) are Mitochondrial intermembrane-facing. The chain crosses the membrane as a helical span at residues 208–228 (LLRPLILPLTQAPVFISFFIA). Over 229–255 (LREMANLPVPSLQTGGLWWFQDLTVSD) the chain is Mitochondrial matrix. Residues 256 to 276 (PIYVLPLVVTATMWCVLELGA) traverse the membrane as a helical segment. Residues 277 to 293 (ETGVQSNDLQFMRNIIR) lie on the Mitochondrial intermembrane side of the membrane. The chain crosses the membrane as a helical span at residues 294-314 (VMPLVVLPVTIHFPSAVFMYW). The Mitochondrial matrix segment spans residues 315–433 (LSSNVFSLCQ…AKKPWQDTLG (119 aa)). At S359 the chain carries Phosphoserine. Residues T395 and T397 each carry the phosphothreonine modification. The segment at 397-433 (THNPLLQHDPSHPPKAPNSNNSSIKANAKKPWQDTLG) is disordered. Over residues 413 to 426 (PNSNNSSIKANAKK) the composition is skewed to low complexity.

The protein belongs to the OXA1/ALB3/YidC family. As to quaternary structure, monomer; predominantly monomeric at low salt concentrations. Homooligomer; predominantly homooligomeric at high salt concentrations. Associates with the mitochondrial ribosome. Associates preferentially as a dimer with the large ribosomal subunit 39S of the mitochondrial ribosome. Interacts with OXA1L; promoting cotranslational quality control in mitochondria.

The protein localises to the mitochondrion inner membrane. Its function is as follows. Mitochondrial membrane insertase that mediates the cotranslational insertion of integral membrane proteins into the mitochondrial inner membrane. Essential for the activity and assembly of cytochrome oxidase. Required for the correct biogenesis of ATP synthase and complex I in mitochondria. The protein is Mitochondrial inner membrane protein OXA1L (Oxa1l) of Mus musculus (Mouse).